Reading from the N-terminus, the 347-residue chain is S-adenosylmethionine:tRNA ribosyltransferase-isomerase (347 aa).

This sequence belongs to the QueA family. Monomer.

Its subcellular location is the cytoplasm. It carries out the reaction 7-aminomethyl-7-carbaguanosine(34) in tRNA + S-adenosyl-L-methionine = epoxyqueuosine(34) in tRNA + adenine + L-methionine + 2 H(+). It functions in the pathway tRNA modification; tRNA-queuosine biosynthesis. Transfers and isomerizes the ribose moiety from AdoMet to the 7-aminomethyl group of 7-deazaguanine (preQ1-tRNA) to give epoxyqueuosine (oQ-tRNA). This Pseudomonas aeruginosa (strain ATCC 15692 / DSM 22644 / CIP 104116 / JCM 14847 / LMG 12228 / 1C / PRS 101 / PAO1) protein is S-adenosylmethionine:tRNA ribosyltransferase-isomerase.